Here is a 428-residue protein sequence, read N- to C-terminus: Glutamate-1-semialdehyde 2,1-aminomutase 2 (428 aa).

Lys267 bears the N6-(pyridoxal phosphate)lysine mark.

It belongs to the class-III pyridoxal-phosphate-dependent aminotransferase family. HemL subfamily. As to quaternary structure, homodimer. The cofactor is pyridoxal 5'-phosphate.

The protein resides in the cytoplasm. The catalysed reaction is (S)-4-amino-5-oxopentanoate = 5-aminolevulinate. Its pathway is porphyrin-containing compound metabolism; protoporphyrin-IX biosynthesis; 5-aminolevulinate from L-glutamyl-tRNA(Glu): step 2/2. The sequence is that of Glutamate-1-semialdehyde 2,1-aminomutase 2 from Oceanobacillus iheyensis (strain DSM 14371 / CIP 107618 / JCM 11309 / KCTC 3954 / HTE831).